The chain runs to 282 residues: Putative hydrolase Bcen_5340 (282 aa).

The Mg(2+) site is built by Glu-124, Glu-126, and Asp-155.

The protein belongs to the FAH family. Requires Mg(2+) as cofactor.

This is Putative hydrolase Bcen_5340 from Burkholderia orbicola (strain AU 1054).